A 372-amino-acid chain; its full sequence is Actin-related protein 2/3 complex subunit 1B (372 aa).

WD repeat units lie at residues 6–45 (FLVEPISCHAWNKDRTQIAICPNNHEVHIYEKSGNKWVQV), 50–89 (EHNGQVTGIDWAPDSNRIVTCGTDRNAYVWTLKGRTWKPT), 94–135 (RINR…WVCK), 140–179 (PIRSTVLSLDWHPNSVLLAAGSCDFKCRIFSAYIKEVEER), 242–280 (SETLPLLAVTFITESSLVAAGHDCFPVLFTYDSAAGKLS), and 324–367 (LHKN…SALK).

Belongs to the WD repeat ARPC1 family. As to quaternary structure, component of the Arp2/3 complex composed of ACTR2/ARP2, ACTR3/ARP3, ARPC1B/p41-ARC, ARPC2/p34-ARC, ARPC3/p21-ARC, ARPC4/p20-ARC and ARPC5/p16-ARC.

Its subcellular location is the cytoplasm. It localises to the cytoskeleton. It is found in the nucleus. Component of the Arp2/3 complex, a multiprotein complex that mediates actin polymerization upon stimulation by nucleation-promoting factor (NPF). The Arp2/3 complex mediates the formation of branched actin networks in the cytoplasm, providing the force for cell motility. In addition to its role in the cytoplasmic cytoskeleton, the Arp2/3 complex also promotes actin polymerization in the nucleus, thereby regulating gene transcription and repair of damaged DNA. The Arp2/3 complex promotes homologous recombination (HR) repair in response to DNA damage by promoting nuclear actin polymerization, leading to drive motility of double-strand breaks (DSBs). This chain is Actin-related protein 2/3 complex subunit 1B (ARPC1B), found in Bos taurus (Bovine).